Consider the following 464-residue polypeptide: MKHDELAAVILAAGKGTRMKSEQPKVLHPIAGKPMVTFPVAGALKHGCQPTVLVVGHGAEAVQAELAEDPVSFALQSEQLGTGHALLCARQALQEFSGTLLLLCGDVPLLRDETLERLIAEHEKTRAAVTVLTAELSQPFGYGRILREGDEVLGIVEEKDASSEQKTIREINTGIYAFEAPFVFEALSGVGCDNAQREYYLTDVLAAARAAGRRVGAVVLEDADEAMGINDRVQLAQASALMRRRINENLMRAGVSFIDPEQTYIEPQVEIGPDSVIYPGVCLGGDTRIGSGCLIEAQVTIRDCQLADNVHVKPGSVLEGSRVGSDTAIGPMAHLRPGTVLAGHNKIGNFVETKKAHIGLGSKASHLTYIGDAELGANVNIGCGTITCNYDGVNKHKTVIEDDVFVGSDTQFVAPVHIGRNSLIGAGSTITKDVPPNALALSRSQQRVVADWRLRHDPKCKNKD.

The segment at 1–232 (MKHDELAAVI…ADEAMGINDR (232 aa)) is pyrophosphorylase. UDP-N-acetyl-alpha-D-glucosamine-binding positions include 11 to 14 (LAAG), Lys25, Gln76, and 81 to 82 (GT). Asp106 lines the Mg(2+) pocket. UDP-N-acetyl-alpha-D-glucosamine contacts are provided by Gly143, Glu157, Asn172, and Asn230. Asn230 is a Mg(2+) binding site. Positions 233–253 (VQLAQASALMRRRINENLMRA) are linker. Positions 254 to 464 (GVSFIDPEQT…RHDPKCKNKD (211 aa)) are N-acetyltransferase. The UDP-N-acetyl-alpha-D-glucosamine site is built by Arg336 and Lys354. The active-site Proton acceptor is the His366. Residues Tyr369 and Asn380 each coordinate UDP-N-acetyl-alpha-D-glucosamine. Acetyl-CoA-binding positions include 389-390 (NY), Ser408, Ala426, and Arg443.

In the N-terminal section; belongs to the N-acetylglucosamine-1-phosphate uridyltransferase family. It in the C-terminal section; belongs to the transferase hexapeptide repeat family. As to quaternary structure, homotrimer. Mg(2+) is required as a cofactor.

The protein localises to the cytoplasm. It catalyses the reaction alpha-D-glucosamine 1-phosphate + acetyl-CoA = N-acetyl-alpha-D-glucosamine 1-phosphate + CoA + H(+). The catalysed reaction is N-acetyl-alpha-D-glucosamine 1-phosphate + UTP + H(+) = UDP-N-acetyl-alpha-D-glucosamine + diphosphate. The protein operates within nucleotide-sugar biosynthesis; UDP-N-acetyl-alpha-D-glucosamine biosynthesis; N-acetyl-alpha-D-glucosamine 1-phosphate from alpha-D-glucosamine 6-phosphate (route II): step 2/2. It participates in nucleotide-sugar biosynthesis; UDP-N-acetyl-alpha-D-glucosamine biosynthesis; UDP-N-acetyl-alpha-D-glucosamine from N-acetyl-alpha-D-glucosamine 1-phosphate: step 1/1. Its pathway is bacterial outer membrane biogenesis; LPS lipid A biosynthesis. In terms of biological role, catalyzes the last two sequential reactions in the de novo biosynthetic pathway for UDP-N-acetylglucosamine (UDP-GlcNAc). The C-terminal domain catalyzes the transfer of acetyl group from acetyl coenzyme A to glucosamine-1-phosphate (GlcN-1-P) to produce N-acetylglucosamine-1-phosphate (GlcNAc-1-P), which is converted into UDP-GlcNAc by the transfer of uridine 5-monophosphate (from uridine 5-triphosphate), a reaction catalyzed by the N-terminal domain. This Syntrophotalea carbinolica (strain DSM 2380 / NBRC 103641 / GraBd1) (Pelobacter carbinolicus) protein is Bifunctional protein GlmU.